The chain runs to 269 residues: Orotidine 5'-phosphate decarboxylase (269 aa).

Lys-92 functions as the Proton donor in the catalytic mechanism.

This sequence belongs to the OMP decarboxylase family. Type 2 subfamily.

It carries out the reaction orotidine 5'-phosphate + H(+) = UMP + CO2. The protein operates within pyrimidine metabolism; UMP biosynthesis via de novo pathway; UMP from orotate: step 2/2. This Natronomonas pharaonis (strain ATCC 35678 / DSM 2160 / CIP 103997 / JCM 8858 / NBRC 14720 / NCIMB 2260 / Gabara) (Halobacterium pharaonis) protein is Orotidine 5'-phosphate decarboxylase.